The following is a 110-amino-acid chain: Large ribosomal subunit protein uL22 (110 aa).

Belongs to the universal ribosomal protein uL22 family. As to quaternary structure, part of the 50S ribosomal subunit.

Functionally, this protein binds specifically to 23S rRNA; its binding is stimulated by other ribosomal proteins, e.g. L4, L17, and L20. It is important during the early stages of 50S assembly. It makes multiple contacts with different domains of the 23S rRNA in the assembled 50S subunit and ribosome. In terms of biological role, the globular domain of the protein is located near the polypeptide exit tunnel on the outside of the subunit, while an extended beta-hairpin is found that lines the wall of the exit tunnel in the center of the 70S ribosome. In Baumannia cicadellinicola subsp. Homalodisca coagulata, this protein is Large ribosomal subunit protein uL22.